The following is a 143-amino-acid chain: Large ribosomal subunit protein uL11 (143 aa).

This sequence belongs to the universal ribosomal protein uL11 family. Part of the ribosomal stalk of the 50S ribosomal subunit. Interacts with L10 and the large rRNA to form the base of the stalk. L10 forms an elongated spine to which L12 dimers bind in a sequential fashion forming a multimeric L10(L12)X complex. One or more lysine residues are methylated.

In terms of biological role, forms part of the ribosomal stalk which helps the ribosome interact with GTP-bound translation factors. This chain is Large ribosomal subunit protein uL11, found in Rhizobium rhizogenes (strain K84 / ATCC BAA-868) (Agrobacterium radiobacter).